The chain runs to 256 residues: Acetyl-coenzyme A carboxylase carboxyl transferase subunit alpha (256 aa).

One can recognise a CoA carboxyltransferase C-terminal domain in the interval 1-236 (MTKITRIIKE…KEEIAAELDS (236 aa)).

It belongs to the AccA family. In terms of assembly, acetyl-CoA carboxylase is a heterohexamer composed of biotin carboxyl carrier protein (AccB), biotin carboxylase (AccC) and two subunits each of ACCase subunit alpha (AccA) and ACCase subunit beta (AccD).

The protein resides in the cytoplasm. It carries out the reaction N(6)-carboxybiotinyl-L-lysyl-[protein] + acetyl-CoA = N(6)-biotinyl-L-lysyl-[protein] + malonyl-CoA. It functions in the pathway lipid metabolism; malonyl-CoA biosynthesis; malonyl-CoA from acetyl-CoA: step 1/1. Functionally, component of the acetyl coenzyme A carboxylase (ACC) complex. First, biotin carboxylase catalyzes the carboxylation of biotin on its carrier protein (BCCP) and then the CO(2) group is transferred by the carboxyltransferase to acetyl-CoA to form malonyl-CoA. This is Acetyl-coenzyme A carboxylase carboxyl transferase subunit alpha from Streptococcus sanguinis (strain SK36).